The chain runs to 634 residues: 1-deoxy-D-xylulose-5-phosphate synthase (634 aa).

Thiamine diphosphate contacts are provided by residues His74 and 115–117 (AHS). A Mg(2+)-binding site is contributed by Asp146. Thiamine diphosphate-binding positions include 147–148 (GA), Asn176, Tyr283, and Glu365. Asn176 contributes to the Mg(2+) binding site.

The protein belongs to the transketolase family. DXPS subfamily. In terms of assembly, homodimer. Mg(2+) serves as cofactor. It depends on thiamine diphosphate as a cofactor.

The catalysed reaction is D-glyceraldehyde 3-phosphate + pyruvate + H(+) = 1-deoxy-D-xylulose 5-phosphate + CO2. It functions in the pathway metabolic intermediate biosynthesis; 1-deoxy-D-xylulose 5-phosphate biosynthesis; 1-deoxy-D-xylulose 5-phosphate from D-glyceraldehyde 3-phosphate and pyruvate: step 1/1. In terms of biological role, catalyzes the acyloin condensation reaction between C atoms 2 and 3 of pyruvate and glyceraldehyde 3-phosphate to yield 1-deoxy-D-xylulose-5-phosphate (DXP). This Burkholderia mallei (strain ATCC 23344) protein is 1-deoxy-D-xylulose-5-phosphate synthase.